Reading from the N-terminus, the 335-residue chain is Eukaryotic translation initiation factor 3 subunit I (335 aa).

WD repeat units follow at residues 8 to 47 (GHER…RLGT), 50 to 91 (GHQG…KVWD), 145 to 184 (CTES…QLEN), 189 to 228 (EFDN…ILKT), and 286 to 325 (GHFG…FDFM).

Belongs to the eIF-3 subunit I family. As to quaternary structure, component of the eukaryotic translation initiation factor 3 (eIF-3) complex.

It is found in the cytoplasm. In terms of biological role, component of the eukaryotic translation initiation factor 3 (eIF-3) complex, which is involved in protein synthesis of a specialized repertoire of mRNAs and, together with other initiation factors, stimulates binding of mRNA and methionyl-tRNAi to the 40S ribosome. The eIF-3 complex specifically targets and initiates translation of a subset of mRNAs involved in cell proliferation. The polypeptide is Eukaryotic translation initiation factor 3 subunit I (tif34) (Aspergillus oryzae (strain ATCC 42149 / RIB 40) (Yellow koji mold)).